A 268-amino-acid chain; its full sequence is Homeobox protein CDX-1 (268 aa).

The interval 1–152 is disordered; it reads MYVGYVLDKD…AGGGGSGKTR (152 aa). Composition is skewed to pro residues over residues 29-42 and 54-67; these read TYAP…PPQY and APAP…PFPA. A compositionally biased stretch (low complexity) spans 73–91; the sequence is AAAYGPGPTASAASPAPLA. A compositionally biased stretch (pro residues) spans 92-108; it reads FGPPPDFSPVPAPPGPG. Positions 115 to 128 are enriched in low complexity; sequence SLGAPGAPSSPGAP. The homeobox DNA-binding region spans 154-213; the sequence is KDKYRVVYTDHQRLELEKEFHYSRYITIRRKSELAANLGLTERQVKIWFQNRRAKERKVN. The segment at 157–178 is interaction with DNA; it reads YRVVYTDHQRLELEKEFHYSRY. An interaction with 5-mCpG DNA region spans residues 196–207; it reads RQVKIWFQNRRA. Positions 209–268 are disordered; the sequence is ERKVNKKKQQQQQPLPPTQLPLPLDGTPTPSGPPLGSLCPTNAGLLGTPSPVPVKEEFLP. Low complexity predominate over residues 229–246; it reads PLPLDGTPTPSGPPLGSL.

Belongs to the Caudal homeobox family. As to expression, intestinal epithelium.

Its subcellular location is the nucleus. Functionally, plays a role in transcriptional regulation. Involved in activated KRAS-mediated transcriptional activation of PRKD1 in colorectal cancer (CRC) cells. Binds to the PRKD1 promoter in colorectal cancer (CRC) cells. Could play a role in the terminal differentiation of the intestine. Binds preferentially to methylated DNA. The polypeptide is Homeobox protein CDX-1 (Cdx1) (Mus musculus (Mouse)).